The primary structure comprises 159 residues: U1 small nuclear ribonucleoprotein C (159 aa).

The Matrin-type zinc finger occupies 4 to 36; it reads FYCDYCDTYLTHDSPSVRKTHCSGRKHKENVKD. Tyr-8 carries the phosphotyrosine modification. Ser-17 bears the Phosphoserine mark. N6-acetyllysine is present on Lys-52. 2 disordered regions span residues 62-96 and 140-159; these read IPPT…PAPH and RPPA…RPDR. The segment covering 63–92 has biased composition (pro residues); sequence PPTPFSAPPPAGAMIPPPPSLPGPPRPGMM.

Belongs to the U1 small nuclear ribonucleoprotein C family. In terms of assembly, component of the U1 snRNP. The U1 snRNP is composed of the U1 snRNA and the 7 core Sm proteins SNRPB, SNRPD1, SNRPD2, SNRPD3, SNRPE, SNRPF and SNRPG that assemble in a heptameric protein ring on the Sm site of the small nuclear RNA to form the core snRNP, and at least 3 U1 snRNP-specific proteins SNRNP70/U1-70K, SNRPA/U1-A and SNRPC/U1-C. SNRPC/U1-C interacts with U1 snRNA and the 5' splice-site region of the pre-mRNA. Interacts (via N-terminus) with TIA1 (via C-terminus); thereby promoting spliceosomal U1 snRNP recruitment to 5' splice sites.

It is found in the nucleus. In terms of biological role, component of the spliceosomal U1 snRNP, which is essential for recognition of the pre-mRNA 5' splice-site and the subsequent assembly of the spliceosome. SNRPC/U1-C is directly involved in initial 5' splice-site recognition for both constitutive and regulated alternative splicing. The interaction with the 5' splice-site seems to precede base-pairing between the pre-mRNA and the U1 snRNA. Stimulates commitment or early (E) complex formation by stabilizing the base pairing of the 5' end of the U1 snRNA and the 5' splice-site region. This Homo sapiens (Human) protein is U1 small nuclear ribonucleoprotein C.